Consider the following 282-residue polypeptide: Acyl-CoA-binding domain-containing protein 6 (282 aa).

The interval Met-1–Pro-31 is disordered. In terms of domain architecture, ACB spans Leu-42–Pro-127. An acyl-CoA-binding positions include Tyr-69–Lys-73 and Lys-95. Ser-106 is subject to Phosphoserine. Tyr-114 contacts an acyl-CoA. ANK repeat units lie at residues Glu-191–Cys-220 and Glu-224–Leu-253.

In terms of assembly, monomer. As to expression, detected in placenta and spleen (at protein level). Detected in placenta, umbilical cord blood, CD34-positive hematopoietic progenitor cells and bone marrow.

The protein resides in the cytoplasm. It localises to the nucleus. In terms of biological role, binds long-chain acyl-coenzyme A molecules with a strong preference for unsaturated C18:1-CoA, lower affinity for unsaturated C20:4-CoA, and very weak affinity for saturated C16:0-CoA. Does not bind fatty acids. Plays a role in protein N-myristoylation. The protein is Acyl-CoA-binding domain-containing protein 6 (ACBD6) of Homo sapiens (Human).